The following is a 2343-amino-acid chain: MGSQTLQILRQGVWAALSGGWYYDPHQATFVNALHLYLWLFLLGLPFTLYMALPSSMIIVAVYCPVVAAVFIVLKMVNYRLHRALDAGEVVDRSANEFTDQRAKAEQGNCSTRRKDSNGPSDPGGGIEMSEFIREATPPVGCSSRNSYAGLDPSNQIGSGSSRLGTAATIKGDTDTAKTSDDISLSLGQSSSLCKEGSEEQDLATDRKLFRLVSNDSFVSIQPSLSSCGQDLPRDFSDKVSLPSHSQHHRVDQSLCSACDTEVASLVPLHSHSYRKEHRPRGVPRTSSSAVAFPDASLSGLPLYQQQQRRGLDPVTELDSSKPHSGTRESLVGQSCPLAQSQPAADRRKSYSQPPTKCGKSRALNAEKSVDSLRSLSTRSSGSTESYCSGTDRDTNSTLSSYKSEQTSSTHIESILSEHDESPKVGDKSARKEGCAESAEERCHGATDRRTSSDKTALEGSTPAGPPEAPDAQASEEKPDQVAPSSSASEDANKNPHANEFTVPGDRPPEQSAESKEEQGEKPSLSTDSKVCKDDGGKQKEGDVRPKSSSLIHRTTSAHKPGRRRTGKKRASSFDSSRHRDYVSFRGVSGTKPHSAIFCHDEDSSDQSDLSRAPSVHSAHHFSSDSSSSATSHSCQSPEGKYSALKTKHGHKDRGTDSDHTHRAHPGPEGTAKKRASRRTSSTHSAKTRARVLSLDSGTVACLNDSNRLLAPDSIKPLTTSKSDLEAKEGEVLDELSLLGRASQLETVTRSRNSLPSQVAFPEGEEQDAATGAAQASEEAVAFRRERSTFRRQAVRRRHNAGSNPTPPTLLIGPPLSLQDGQQGQQSTAQVKVQSRPPSQAAVLSASASLLVRKGSVHLDASHDHASAVGGSSLHDELGKFSSTLYETGGCDMSLVNFEPAARRASNICDTDSHVSSSTSVRFYPHDMLSLPQIRLNRLLTIDTDLLEQQDIDLSPDLAATYGPTEEAAQKVKHYYRFWILPQLWIGINFDRLTLLALFDRNREILENILAVVLAILVAFLGSILLIQGFFRDIWVFQFCLVIASCQYSLLKSVQPDSSSPRHGHNRIIAYSRPVYFCLCCGLIWLLDYGSRNLSTSKFKLYGITFTNPLVLLSARDLVIVFTLCFPIVFFIGLLPQVNTFVMYLCEQLDIHIFGGNATTSLLAALYSFLCSVVAVALLYGLCYGALRDSWDGQHIPVLFSVFCGLLVAVSYHLSRQSSDPSVLFSLIQSKIFPKTDEKNPEDPLSEVKDPLPEKLSNSVSERLQSDLVVCVVIGVLYFAIHVSTVFTALQPALKYVLYALVGFVGLVTHYVLPQVRKQLPWHCFSRPLLKTAEHNQYEVRNAATMMWFEKLHVWLLFVEKNVIYPLIVLNELSSSADTIASPKKLDTELGALMITVAGLKLLRSSFSSPTYQYITVIFTVLFFKFDYEAFSETMLLDLFFMSILFSKLWELLYKLQFVYTYVAPWQITWGSAFHAFAQPFAVPHSAMLFVQAVVSALFSTPLNPFLGSAIFITSYVRPVKFWERDYNTKRVDHSNTRLASQLDRNPGSDDNNLNSIFYEHLTRSLQHSLCGDLLLGRWGNYSTGDCFILASDYLNALVHLIETGNGLVTFQLRGLEFRGTYCQQREVEAITEGVEEDEGFCCCEPGHVPHVLSFNAAFGQRWLAWEVVVTKYILEGYSITDNSAASMLQVFDLRRVLTTYYVKGIIYYVTTSSKLEEWLANETMQEGLRLCADRNYVDVDPTFNPNIDEDYDHRLAGISRESFCVIYLNWIEYCSSRRAKPLDVDKDSSLVTLCYGLCVLGRRALGTASHHMSSNLESFLYGLHALFKGDFRISSVRDEWIFADMELLRKVVVPGIRMSIKLHQDHFTSPDEYDDPTVLYEAIVSHEKNLVIAHEGDPAWRSAVLANSPSLLALRHVMDDGTNEYKIIMLNRRYLSFRVIKVNKECVRGLWAGQQQELVFLRNRNPERGSIQNAKQALRNMINSSCDQPIGYPIFVSPLTTSYSDSHDQLKEILGGPISLGNIRDFIVSTWHRLRKGCGAGCNSGGNIEDSDTGGGTSCPANSATTASDPHNSVPQGSTGHPGQGAGSGLHPPTTSYPPTLGTSHSAHSVQSSLVRQSPARASMASQSSYCYGSRHSSLRMSTTGFVPCRRSSTSQISLRNLPSSIQSRLSMVNQMEAASQGGMGCVQHGLPSSSSSSQSIPACKHHTLVAFLGAEGSQSGATEAQPGNTSSPATISHARKGEVVYRVQIVDLSQILEGINVSKRKELQWPDEGIRLKAGRNSWKDWSPQEGMEGHVVHRWVPCSRDPSTRSHIDKTVLLVQIDDKYVTVIETGVLELGAEV.

2 helical membrane-spanning segments follow: residues 33-53 and 57-77; these read ALHLYLWLFLLGLPFTLYMAL and MIIVAVYCPVVAAVFIVLKMV. Disordered stretches follow at residues 98–163, 271–290, 306–691, and 749–826; these read FTDQ…GSSR, SHSYRKEHRPRGVPRTSSSA, QQQR…TRAR, and TRSR…QGQQ. The span at 143–163 shows a compositional bias: polar residues; sequence SSRNSYAGLDPSNQIGSGSSR. Over residues 272-282 the composition is skewed to basic residues; the sequence is HSYRKEHRPRG. The span at 372–390 shows a compositional bias: low complexity; that stretch reads SLRSLSTRSSGSTESYCSG. Residues 396–412 are compositionally biased toward polar residues; that stretch reads NSTLSSYKSEQTSSTHI. Composition is skewed to basic and acidic residues over residues 416-457, 507-521, and 530-546; these read LSEH…DKTA, RPPEQSAESKEEQGE, and KVCKDDGGKQKEGDVRP. The segment covering 556–571 has biased composition (basic residues); sequence TSAHKPGRRRTGKKRA. Low complexity-rich tracts occupy residues 624–637, 769–780, and 809–826; these read SDSSSSATSHSCQS, AATGAAQASEEA, and TLLIGPPLSLQDGQQGQQ. 13 consecutive transmembrane segments (helical) span residues 978-998, 1009-1029, 1034-1054, 1068-1088, 1118-1138, 1162-1182, 1195-1215, 1268-1288, 1296-1316, 1406-1426, 1434-1454, 1458-1478, and 1493-1513; these read FWILPQLWIGINFDRLTLLAL, ILAVVLAILVAFLGSILLIQG, IWVFQFCLVIASCQYSLLKSV, IIAYSRPVYFCLCCGLIWLLD, LVIVFTLCFPIVFFIGLLPQV, LLAALYSFLCSVVAVALLYGL, HIPVLFSVFCGLLVAVSYHLS, LVVCVVIGVLYFAIHVSTVFT, YVLYALVGFVGLVTHYVLPQV, SFSSPTYQYITVIFTVLFFKF, TMLLDLFFMSILFSKLWELLY, FVYTYVAPWQITWGSAFHAFA, and AVVSALFSTPLNPFLGSAIFI. Residues 2050–2120 form a disordered region; that stretch reads EDSDTGGGTS…VQSSLVRQSP (71 aa). Polar residues-rich tracts occupy residues 2060-2080 and 2094-2117; these read CPANSATTASDPHNSVPQGST and PTTSYPPTLGTSHSAHSVQSSLVR.

Belongs to the pecanex family. As to expression, specifically expressed in the germ line and not in the somatic cells of the testis, reaching its peak at the pachytene stage of the meiotic prophase. Detected in pachytene spermatocytes and round spermatids (at protein level).

Its subcellular location is the membrane. In Rattus norvegicus (Rat), this protein is Pecanex-like protein 1.